Here is a 378-residue protein sequence, read N- to C-terminus: Erythronate-4-phosphate dehydrogenase (378 aa).

Substrate contacts are provided by Ser-45 and Thr-66. 2 residues coordinate NAD(+): Asp-146 and Thr-175. Arg-208 is a catalytic residue. Asp-232 provides a ligand contact to NAD(+). Glu-237 is an active-site residue. His-254 (proton donor) is an active-site residue. Gly-257 contacts NAD(+). Tyr-258 serves as a coordination point for substrate.

The protein belongs to the D-isomer specific 2-hydroxyacid dehydrogenase family. PdxB subfamily. In terms of assembly, homodimer.

It localises to the cytoplasm. The catalysed reaction is 4-phospho-D-erythronate + NAD(+) = (R)-3-hydroxy-2-oxo-4-phosphooxybutanoate + NADH + H(+). The protein operates within cofactor biosynthesis; pyridoxine 5'-phosphate biosynthesis; pyridoxine 5'-phosphate from D-erythrose 4-phosphate: step 2/5. In terms of biological role, catalyzes the oxidation of erythronate-4-phosphate to 3-hydroxy-2-oxo-4-phosphonooxybutanoate. The sequence is that of Erythronate-4-phosphate dehydrogenase from Cronobacter sakazakii (strain ATCC BAA-894) (Enterobacter sakazakii).